Reading from the N-terminus, the 162-residue chain is Nitric oxide synthase, inducible (162 aa).

Over residues 24–37 (LQYHSLSKQQNESP) the composition is skewed to polar residues. Residues 24–65 (LQYHSLSKQQNESPQPLVGTGKKSPESLVKPDATPLSSPRHV) form a disordered region. Residues cysteine 90 and cysteine 95 each contribute to the Zn(2+) site. (6R)-L-erythro-5,6,7,8-tetrahydrobiopterin is bound at residue serine 98. Glutamate 132 serves as a coordination point for L-arginine. Histidine 160 serves as a coordination point for FAD.

It belongs to the NOS family. In terms of assembly, homodimer. Interacts with NHERF1. Interacts with GAPDH; induced by oxidatively-modified low-densitity lipoprotein (LDL(ox)). Interacts with S100A8 and S100A9 to form the iNOS-S100A8/9 transnitrosylase complex. Interacts with SPSB1, SPSB2 and SPSB4. Interacts with ELOC and CUL5 in the presence of SPSB1 or SPSB2 or SPSB4. Forms a complex with ASL, ASS1 and HSP90AA1; the complex regulates cell-autonomous L-arginine synthesis and citrulline recycling while channeling extracellular L-arginine to nitric oxide synthesis pathway. The cofactor is heme b. It depends on FAD as a cofactor. Requires FMN as cofactor. (6R)-L-erythro-5,6,7,8-tetrahydrobiopterin is required as a cofactor. In terms of processing, polyubiquitinated; mediated by SPSB1, SPSB2 and SPSB4, leading to proteasomal degradation.

Its subcellular location is the cytoplasm. It localises to the cytosol. It carries out the reaction 2 L-arginine + 3 NADPH + 4 O2 + H(+) = 2 L-citrulline + 2 nitric oxide + 3 NADP(+) + 4 H2O. With respect to regulation, regulated by calcium/calmodulin. In terms of biological role, produces nitric oxide (NO) which is a messenger molecule with diverse functions throughout the body. In macrophages, NO mediates tumoricidal and bactericidal actions. Also has nitrosylase activity and mediates cysteine S-nitrosylation of cytoplasmic target proteins such PTGS2/COX2. As component of the iNOS-S100A8/9 transnitrosylase complex involved in the selective inflammatory stimulus-dependent S-nitrosylation of GAPDH implicated in regulation of the GAIT complex activity and probably multiple targets including ANXA5, EZR, MSN and VIM. Involved in inflammation, enhances the synthesis of pro-inflammatory mediators such as IL6 and IL8. The sequence is that of Nitric oxide synthase, inducible (NOS2) from Macaca mulatta (Rhesus macaque).